We begin with the raw amino-acid sequence, 315 residues long: Ribosomal protein L11 methyltransferase (315 aa).

The S-adenosyl-L-methionine site is built by threonine 163, glycine 185, aspartate 207, and asparagine 249.

The protein belongs to the methyltransferase superfamily. PrmA family.

It localises to the cytoplasm. The catalysed reaction is L-lysyl-[protein] + 3 S-adenosyl-L-methionine = N(6),N(6),N(6)-trimethyl-L-lysyl-[protein] + 3 S-adenosyl-L-homocysteine + 3 H(+). Its function is as follows. Methylates ribosomal protein L11. The polypeptide is Ribosomal protein L11 methyltransferase (Lactobacillus helveticus (strain DPC 4571)).